The chain runs to 209 residues: Large ribosomal subunit protein uL3 (209 aa).

Residues 128–152 (QARGPMSHGSRYHRRPGSMGPVDPN) form a disordered region.

It belongs to the universal ribosomal protein uL3 family. Part of the 50S ribosomal subunit. Forms a cluster with proteins L14 and L19.

Functionally, one of the primary rRNA binding proteins, it binds directly near the 3'-end of the 23S rRNA, where it nucleates assembly of the 50S subunit. The polypeptide is Large ribosomal subunit protein uL3 (Halalkalibacterium halodurans (strain ATCC BAA-125 / DSM 18197 / FERM 7344 / JCM 9153 / C-125) (Bacillus halodurans)).